Here is a 264-residue protein sequence, read N- to C-terminus: ATP synthase subunit a (264 aa).

The next 6 membrane-spanning stretches (helical) occupy residues isoleucine 32–valine 52, valine 89–methionine 109, aspartate 134–isoleucine 154, isoleucine 177–leucine 197, leucine 208–valine 228, and leucine 235–valine 255.

Belongs to the ATPase A chain family. F-type ATPases have 2 components, CF(1) - the catalytic core - and CF(0) - the membrane proton channel. CF(1) has five subunits: alpha(3), beta(3), gamma(1), delta(1), epsilon(1). CF(0) has three main subunits: a(1), b(2) and c(9-12). The alpha and beta chains form an alternating ring which encloses part of the gamma chain. CF(1) is attached to CF(0) by a central stalk formed by the gamma and epsilon chains, while a peripheral stalk is formed by the delta and b chains.

Its subcellular location is the cell inner membrane. In terms of biological role, key component of the proton channel; it plays a direct role in the translocation of protons across the membrane. In Shewanella piezotolerans (strain WP3 / JCM 13877), this protein is ATP synthase subunit a.